We begin with the raw amino-acid sequence, 232 residues long: Small ribosomal subunit protein uS3 (232 aa).

The KH type-2 domain occupies 39–107 (VRQFLTKELQ…PAQINIAEVR (69 aa)). Positions 213–232 (AANAVEPKGDKPKKQRKGRK) are disordered.

This sequence belongs to the universal ribosomal protein uS3 family. As to quaternary structure, part of the 30S ribosomal subunit. Forms a tight complex with proteins S10 and S14.

In terms of biological role, binds the lower part of the 30S subunit head. Binds mRNA in the 70S ribosome, positioning it for translation. This is Small ribosomal subunit protein uS3 from Vibrio campbellii (strain ATCC BAA-1116).